The following is a 168-amino-acid chain: Transcription elongation factor GreB (168 aa).

Belongs to the GreA/GreB family. GreB subfamily.

Necessary for efficient RNA polymerase transcription elongation past template-encoded arresting sites. The arresting sites in DNA have the property of trapping a certain fraction of elongating RNA polymerases that pass through, resulting in locked ternary complexes. Cleavage of the nascent transcript by cleavage factors such as GreA or GreB allows the resumption of elongation from the new 3'terminus. GreB releases sequences of up to 9 nucleotides in length. In Xanthomonas axonopodis pv. citri (strain 306), this protein is Transcription elongation factor GreB.